Consider the following 173-residue polypeptide: Shikimate kinase (173 aa).

ATP is bound at residue 14–19 (GAGKST). Residue serine 18 coordinates Mg(2+). Positions 36, 60, and 82 each coordinate substrate. Position 120 (lysine 120) interacts with ATP. Residue arginine 140 participates in substrate binding.

It belongs to the shikimate kinase family. In terms of assembly, monomer. Mg(2+) is required as a cofactor.

The protein resides in the cytoplasm. The catalysed reaction is shikimate + ATP = 3-phosphoshikimate + ADP + H(+). Its pathway is metabolic intermediate biosynthesis; chorismate biosynthesis; chorismate from D-erythrose 4-phosphate and phosphoenolpyruvate: step 5/7. Functionally, catalyzes the specific phosphorylation of the 3-hydroxyl group of shikimic acid using ATP as a cosubstrate. This chain is Shikimate kinase (aroK), found in Wigglesworthia glossinidia brevipalpis.